A 423-amino-acid polypeptide reads, in one-letter code: Gamma-glutamyl phosphate reductase (423 aa).

It belongs to the gamma-glutamyl phosphate reductase family.

Its subcellular location is the cytoplasm. It catalyses the reaction L-glutamate 5-semialdehyde + phosphate + NADP(+) = L-glutamyl 5-phosphate + NADPH + H(+). The protein operates within amino-acid biosynthesis; L-proline biosynthesis; L-glutamate 5-semialdehyde from L-glutamate: step 2/2. Functionally, catalyzes the NADPH-dependent reduction of L-glutamate 5-phosphate into L-glutamate 5-semialdehyde and phosphate. The product spontaneously undergoes cyclization to form 1-pyrroline-5-carboxylate. This chain is Gamma-glutamyl phosphate reductase, found in Brucella suis (strain ATCC 23445 / NCTC 10510).